Here is a 520-residue protein sequence, read N- to C-terminus: Glutamate--cysteine ligase (520 aa).

Belongs to the glutamate--cysteine ligase type 1 family. Type 1 subfamily.

The catalysed reaction is L-cysteine + L-glutamate + ATP = gamma-L-glutamyl-L-cysteine + ADP + phosphate + H(+). It participates in sulfur metabolism; glutathione biosynthesis; glutathione from L-cysteine and L-glutamate: step 1/2. This Leptospira interrogans serogroup Icterohaemorrhagiae serovar copenhageni (strain Fiocruz L1-130) protein is Glutamate--cysteine ligase.